We begin with the raw amino-acid sequence, 65 residues long: Conotoxin TsMRCL-05 (65 aa).

A signal peptide spans 1 to 22 (MHCLPVLVILLLLIASTPSVDA). The propeptide occupies 23–52 (RPNPKDDVPLASFHGAVNAKRYLRTLWNSR). Ile-64 is subject to Isoleucine amide.

Belongs to the conotoxin T superfamily. Post-translationally, contains 2 disulfide bonds that can be either 'C1-C3, C2-C4' or 'C1-C4, C2-C3', since these disulfide connectivities have been observed for conotoxins with cysteine framework V (for examples, see AC P0DQQ7 and AC P81755). Expressed by the venom duct.

The protein localises to the secreted. The protein is Conotoxin TsMRCL-05 of Conus tessulatus (Tessellate cone).